A 314-amino-acid chain; its full sequence is Protein REGULATOR OF FATTY ACID COMPOSITION 3, chloroplastic (314 aa).

The transit peptide at 1–47 (MESLLHASSSLVSLRPRIDGRDSFINPSRVCLNPSLGRRGSKPLPLV) directs the protein to the chloroplast. 2 disordered regions span residues 49–73 (AAKK…ATGP) and 214–314 (AITE…NVGG). Over residues 56–69 (KKDDNHNFSARPDE) the composition is skewed to basic and acidic residues. 2 stretches are compositionally biased toward acidic residues: residues 233–269 (EYYD…DDDG) and 277–294 (GDEE…EQEE). Basic and acidic residues predominate over residues 295-308 (GQDKSTNGRRETRR).

Belongs to the bacterial ribosomal protein bS6 family. In terms of assembly, interacts with CFM3B/SPRT2 in plastids. As to expression, expressed ubiquitously in roots, leaves, stems, flower buds, flowers and siliques.

It is found in the plastid. The protein localises to the chloroplast. In terms of biological role, prevents non-specific action of the splicing factor CFM3b during plastid rRNA biogenesis to improve the accuracy of plastid rRNA processing. Required for plastid functions such as photosynthesis, intracellular distribution, plastid rRNAs biosynthesis and plastid gene expression in roots. Involved in a sucrose-conditional process important for the organization of root lateral and apical meristems (e.g. establishment of RAM from pericycle and symplasmic connectivity), and subsequent primary and lateral roots development. Modulates C18 unsaturated fatty acid metabolism. The sequence is that of Protein REGULATOR OF FATTY ACID COMPOSITION 3, chloroplastic from Arabidopsis thaliana (Mouse-ear cress).